The sequence spans 942 residues: Probable serine/threonine-protein kinase DDB_G0279719 (942 aa).

Residues 4–617 form the Protein kinase domain; the sequence is YEVVKLIGVG…IDLILQNKLF (614 aa). ATP is bound by residues 10–18 and Lys-33; that span reads IGVGGEAKA. Disordered stretches follow at residues 109–170, 247–303, 352–371, and 408–445; these read NNNQ…INNN, SFSN…NGNT, QPPQ…GADV, and NDPS…LNIN. The segment covering 258–272 has biased composition (low complexity); the sequence is NSNDSNLHQSSSNSS. A compositionally biased stretch (polar residues) spans 288 to 303; that stretch reads SPGTSTPYQKGSNGNT. Low complexity-rich tracts occupy residues 353–367 and 410–432; these read PPQS…SSPT and PSSH…PQSP. Asp-487 serves as the catalytic Proton acceptor. Residues 642–686 are disordered; the sequence is TNSKSNSSNNLNNSNSNNDIINNNNNNNSSNNINNNNIVNLNNSY. The stretch at 675-703 forms a coiled coil; that stretch reads NNNNIVNLNNSYNNKQDKCEQRNKSLNQN.

The protein belongs to the protein kinase superfamily. Ser/Thr protein kinase family.

The enzyme catalyses L-seryl-[protein] + ATP = O-phospho-L-seryl-[protein] + ADP + H(+). It carries out the reaction L-threonyl-[protein] + ATP = O-phospho-L-threonyl-[protein] + ADP + H(+). This Dictyostelium discoideum (Social amoeba) protein is Probable serine/threonine-protein kinase DDB_G0279719.